The primary structure comprises 527 residues: Peptide chain release factor 3 (527 aa).

Residues 9–277 form the tr-type G domain; sequence AKRRTFAIIS…AVVDWAPLPL (269 aa). GTP is bound by residues 18-25, 86-90, and 140-143; these read SHPDAGKT, DTPGH, and NKLD.

Belongs to the TRAFAC class translation factor GTPase superfamily. Classic translation factor GTPase family. PrfC subfamily.

The protein resides in the cytoplasm. Increases the formation of ribosomal termination complexes and stimulates activities of RF-1 and RF-2. It binds guanine nucleotides and has strong preference for UGA stop codons. It may interact directly with the ribosome. The stimulation of RF-1 and RF-2 is significantly reduced by GTP and GDP, but not by GMP. The polypeptide is Peptide chain release factor 3 (Pseudomonas fluorescens (strain ATCC BAA-477 / NRRL B-23932 / Pf-5)).